A 614-amino-acid chain; its full sequence is Allergen Ara h 1, clone P17 (614 aa).

The first 25 residues, 1–25 (MRGRVSPLMLLLGILVLASVSATQA), serve as a signal peptide directing secretion. Disordered stretches follow at residues 72 to 177 (DTGA…RRFS), 334 to 356 (NAGG…DNEG), 372 to 397 (HAKS…DGEP), and 464 to 491 (KEQQ…SNRE). Over residues 81-132 (PPGERTRGRQPGDYDDDRRQPRREEGGRWGPAEPREREREEDWRQPREDWRR) the composition is skewed to basic and acidic residues. The region spanning 169 to 327 (FYFPSRRFST…AFNAEFNEIR (159 aa)) is the Cupin type-1 1 domain. In terms of domain architecture, Cupin type-1 2 spans 390–566 (INLRDGEPDL…AFPGSGEQVE (177 aa)). Residues 464–474 (KEQQQRGRREQ) show a composition bias toward basic and acidic residues. A compositionally biased stretch (acidic residues) spans 475 to 486 (EWEEEEEDEEEE). N-linked (GlcNAc...) asparagine glycosylation occurs at asparagine 516. Residues 572 to 614 (QRESHFVSARPQSQSPSSPEKEDQEEENQGGKGPLLSILKAFN) form a disordered region.

Belongs to the 7S seed storage protein family.

This Arachis hypogaea (Peanut) protein is Allergen Ara h 1, clone P17.